Consider the following 295-residue polypeptide: MNNSMTEARNEATMHLDEMSIIQALETMNAEDQKVPQQIHDILPKLAEVIKVTTEQFKQGGRIIYIGAGTSGRLGVLDAAECVPTFNTSTNEVIGLIAGGQRAMTVAVEGAEDSESLAREDLKHIHLNEKDVVIGIAASGSTPYVMGGLKCATEIGAHTVAISCNTNTKISDLAQYPIEVNVGPEVLTGSTRLKSGTAQKLILNMISTITMVGVGKVYDNLMVDVKATNQKLIDRSIRIIQDICDISYNQAQSLYESADQNLKVAVVMHLCDINKSEAVTRLNDNNHIIKKAIQN.

The region spanning 53–216 is the SIS domain; the sequence is TTEQFKQGGR…STITMVGVGK (164 aa). Glutamate 81 functions as the Proton donor in the catalytic mechanism. Glutamate 112 is a catalytic residue.

It belongs to the GCKR-like family. MurNAc-6-P etherase subfamily. As to quaternary structure, homodimer.

It carries out the reaction N-acetyl-D-muramate 6-phosphate + H2O = N-acetyl-D-glucosamine 6-phosphate + (R)-lactate. It participates in amino-sugar metabolism; N-acetylmuramate degradation. Its function is as follows. Specifically catalyzes the cleavage of the D-lactyl ether substituent of MurNAc 6-phosphate, producing GlcNAc 6-phosphate and D-lactate. In Staphylococcus saprophyticus subsp. saprophyticus (strain ATCC 15305 / DSM 20229 / NCIMB 8711 / NCTC 7292 / S-41), this protein is N-acetylmuramic acid 6-phosphate etherase.